The primary structure comprises 308 residues: Ornithine carbamoyltransferase (308 aa).

Carbamoyl phosphate contacts are provided by residues 50-53 (STRT), Gln-77, Arg-101, and 128-131 (HPCQ). L-ornithine contacts are provided by residues Asn-160, Asp-224, and 228–229 (SM). Residues 264–265 (CL) and Arg-292 each bind carbamoyl phosphate.

The protein belongs to the aspartate/ornithine carbamoyltransferase superfamily. OTCase family.

It is found in the cytoplasm. The catalysed reaction is carbamoyl phosphate + L-ornithine = L-citrulline + phosphate + H(+). It participates in amino-acid biosynthesis; L-arginine biosynthesis; L-arginine from L-ornithine and carbamoyl phosphate: step 1/3. Reversibly catalyzes the transfer of the carbamoyl group from carbamoyl phosphate (CP) to the N(epsilon) atom of ornithine (ORN) to produce L-citrulline. This chain is Ornithine carbamoyltransferase, found in Mycobacterium ulcerans (strain Agy99).